A 341-amino-acid polypeptide reads, in one-letter code: L-threonine 3-dehydrogenase (341 aa).

Zn(2+) is bound at residue Cys-38. Catalysis depends on charge relay system residues Thr-40 and His-43. His-63, Glu-64, Cys-93, Cys-96, Cys-99, and Cys-107 together coordinate Zn(2+). Residues Ile-175, Asp-195, Arg-200, 262-264 (LGI), and 286-287 (IY) contribute to the NAD(+) site.

It belongs to the zinc-containing alcohol dehydrogenase family. Homotetramer. It depends on Zn(2+) as a cofactor.

The protein localises to the cytoplasm. It catalyses the reaction L-threonine + NAD(+) = (2S)-2-amino-3-oxobutanoate + NADH + H(+). Its pathway is amino-acid degradation; L-threonine degradation via oxydo-reductase pathway; glycine from L-threonine: step 1/2. Its function is as follows. Catalyzes the NAD(+)-dependent oxidation of L-threonine to 2-amino-3-ketobutyrate. This Photorhabdus laumondii subsp. laumondii (strain DSM 15139 / CIP 105565 / TT01) (Photorhabdus luminescens subsp. laumondii) protein is L-threonine 3-dehydrogenase.